The following is a 146-amino-acid chain: VHWSAEEKQLITGLWGKVNVAQCGGEALARLLIVYPWTQRFFSSFGNLSSPSAILGNPMVRAHGKKVLTSFGDAVKNMDNIKNTFAQLSELHCDKLHVDPENFRLLGDILIIVLAAHFAKDFTPECQAAWEKLVRVVAHALARKYH.

The region spanning 2-146 is the Globin domain; the sequence is HWSAEEKQLI…VAHALARKYH (145 aa). 2 residues coordinate heme b: His-63 and His-92.

Belongs to the globin family. Heterotetramer of two alpha chains and two beta chains. In terms of tissue distribution, red blood cells.

Involved in oxygen transport from the lung to the various peripheral tissues. This Eudyptes chrysocome (Western rockhopper penguin) protein is Hemoglobin subunit beta (HBB).